Here is a 501-residue protein sequence, read N- to C-terminus: Aldehyde dehydrogenase 1A1 (501 aa).

Serine 2 is subject to N-acetylserine. N6-acetyllysine is present on residues lysine 91 and lysine 128. Residues 167–170, 193–196, 226–227, and 246–247 each bind NAD(+); these read IPWN, KPAE, GP, and GS. An N6-acetyllysine modification is found at lysine 252. Glutamate 269 serves as the catalytic Proton acceptor. 269 to 271 serves as a coordination point for NAD(+); it reads ELG. The active-site Nucleophile is cysteine 303. A mediates interaction with PRMT3 region spans residues 336-501; sequence LTPGATQGPQ…VTVKISQKNS (166 aa). Threonine 337 carries the phosphothreonine modification. An NAD(+)-binding site is contributed by 349–353; the sequence is EQYDK. Lysine 353 and lysine 367 each carry N6-acetyllysine. 400-402 is an NAD(+) binding site; the sequence is EIF. Lysine 410 carries the N6-acetyllysine modification. Serine 413 carries the post-translational modification Phosphoserine. Residues lysine 419 and lysine 495 each carry the N6-acetyllysine modification.

Belongs to the aldehyde dehydrogenase family. In terms of assembly, homotetramer. Interacts with PRMT3; the interaction is direct, inhibits ALDH1A1 aldehyde dehydrogenase activity and is independent of the methyltransferase activity of PRMT3. Post-translationally, the N-terminus is blocked most probably by acetylation.

It is found in the cytoplasm. Its subcellular location is the cytosol. It localises to the cell projection. The protein localises to the axon. The enzyme catalyses an aldehyde + NAD(+) + H2O = a carboxylate + NADH + 2 H(+). It carries out the reaction all-trans-retinal + NAD(+) + H2O = all-trans-retinoate + NADH + 2 H(+). The catalysed reaction is 9-cis-retinal + NAD(+) + H2O = 9-cis-retinoate + NADH + 2 H(+). It catalyses the reaction 11-cis-retinal + NAD(+) + H2O = 11-cis-retinoate + NADH + 2 H(+). The enzyme catalyses 13-cis-retinal + NAD(+) + H2O = 13-cis-retinoate + NADH + 2 H(+). It carries out the reaction 3-deoxyglucosone + NAD(+) + H2O = 2-dehydro-3-deoxy-D-gluconate + NADH + 2 H(+). The catalysed reaction is (E)-4-hydroxynon-2-enal + NAD(+) + H2O = (E)-4-hydroxynon-2-enoate + NADH + 2 H(+). It catalyses the reaction malonaldehyde + NAD(+) + H2O = 3-oxopropanoate + NADH + 2 H(+). The enzyme catalyses hexanal + NAD(+) + H2O = hexanoate + NADH + 2 H(+). It carries out the reaction propanal + NAD(+) + H2O = propanoate + NADH + 2 H(+). The catalysed reaction is acetaldehyde + NAD(+) + H2O = acetate + NADH + 2 H(+). It catalyses the reaction benzaldehyde + NAD(+) + H2O = benzoate + NADH + 2 H(+). The enzyme catalyses 4-aminobutanal + NAD(+) + H2O = 4-aminobutanoate + NADH + 2 H(+). Its pathway is cofactor metabolism; retinol metabolism. Functionally, cytosolic dehydrogenase that catalyzes the irreversible oxidation of a wide range of aldehydes to their corresponding carboxylic acid. Functions downstream of retinol dehydrogenases and catalyzes the oxidation of retinaldehyde into retinoic acid, the second step in the oxidation of retinol/vitamin A into retinoic acid. This pathway is crucial to control the levels of retinol and retinoic acid, two important molecules which excess can be teratogenic and cytotoxic. Also oxidizes aldehydes resulting from lipid peroxidation like (E)-4-hydroxynon-2-enal/HNE, malonaldehyde and hexanal that form protein adducts and are highly cytotoxic. By participating for instance to the clearance of (E)-4-hydroxynon-2-enal/HNE in the lens epithelium prevents the formation of HNE-protein adducts and lens opacification. Also functions downstream of fructosamine-3-kinase in the fructosamine degradation pathway by catalyzing the oxidation of 3-deoxyglucosone, the carbohydrate product of fructosamine 3-phosphate decomposition, which is itself a potent glycating agent that may react with lysine and arginine side-chains of proteins. Also has an aminobutyraldehyde dehydrogenase activity and is probably part of an alternative pathway for the biosynthesis of GABA/4-aminobutanoate in midbrain, thereby playing a role in GABAergic synaptic transmission. The chain is Aldehyde dehydrogenase 1A1 from Macaca fascicularis (Crab-eating macaque).